The primary structure comprises 399 residues: ATP phosphoribosyltransferase regulatory subunit (399 aa).

This sequence belongs to the class-II aminoacyl-tRNA synthetase family. HisZ subfamily. In terms of assembly, heteromultimer composed of HisG and HisZ subunits.

It localises to the cytoplasm. It functions in the pathway amino-acid biosynthesis; L-histidine biosynthesis; L-histidine from 5-phospho-alpha-D-ribose 1-diphosphate: step 1/9. In terms of biological role, required for the first step of histidine biosynthesis. May allow the feedback regulation of ATP phosphoribosyltransferase activity by histidine. The protein is ATP phosphoribosyltransferase regulatory subunit of Symbiobacterium thermophilum (strain DSM 24528 / JCM 14929 / IAM 14863 / T).